The sequence spans 382 residues: Plasmid replication initiator protein TrfA (382 aa).

Positions 1-163 (MNRTFDRKAY…TARSALFTTR (163 aa)) are toxic in E.coli strain K12 / DH5-alpha; may be membrane-associated. Residues 246-265 (SRLQATAMGFTSDRVGHLES) constitute a DNA-binding region (H-T-H motif). Positions 286 to 297 (VLIDEEIVVLFA) are hydrophobic region (HR); required for membrane association.

In terms of assembly, forms a dimer in solution, binds DNA as a monomer. Both mononer and dimer of the short form interact with Hda (Dp).

Its subcellular location is the cell inner membrane. Required for initiation of plasmid DNA replication, along with host-derived DnaA and other host proteins. Both forms of the protein are capable of initiating plasmid replication in a number of Gram-negative bacteria. Binds to 8 17-base pair repeat sequences (iterons) in the RK2 minimal replication origin (oriV), opening the origin of replication. oriV opening does not absolutely require the presence of nucleotides; formation of open complex is somewhat enhanced by ATP or ATP gamma S, while DnaA or HU is required for full opening. Its function is as follows. Also involved in plasmid copy number control, promoting intermolecular coupling of protein bound iterons at oriV, which inhibits replication initiation. The sequence is that of Plasmid replication initiator protein TrfA (trfA) from Escherichia coli.